The primary structure comprises 406 residues: Magnesium transporter NIPA4 (406 aa).

Topologically, residues M1–G57 are extracellular. N-linked (GlcNAc...) asparagine glycans are attached at residues N9, N14, and N42. A helical membrane pass occupies residues F58–L78. The Cytoplasmic portion of the chain corresponds to K79–A126. The helical transmembrane segment at F127 to F147 threads the bilayer. Residues S148–S155 lie on the Extracellular side of the membrane. A helical transmembrane segment spans residues L156 to I176. Topologically, residues H177–T197 are cytoplasmic. Residues G198–A218 traverse the membrane as a helical segment. The Extracellular segment spans residues P219 to N225. Residues I226 to G246 traverse the membrane as a helical segment. The Cytoplasmic segment spans residues L247–H263. The chain crosses the membrane as a helical span at residues P264–L284. Residues N285–L295 lie on the Extracellular side of the membrane. N-linked (GlcNAc...) asparagine glycosylation occurs at N292. Residues V296 to F316 traverse the membrane as a helical segment. Residues K317 to D326 lie on the Cytoplasmic side of the membrane. A helical membrane pass occupies residues I327 to F347. The Extracellular segment spans residues K348–S406.

The protein belongs to the NIPA family.

Its subcellular location is the cell membrane. It carries out the reaction Mg(2+)(in) = Mg(2+)(out). Its function is as follows. Acts as a Mg(2+) transporter. Can also transport other divalent cations such as Ba(2+), Sr(2+) and Fe(2+) but to a much less extent than Mg(2+). May be a receptor for ligands (trioxilins A3 and B3) from the hepoxilin pathway. This Mus musculus (Mouse) protein is Magnesium transporter NIPA4 (Nipal4).